We begin with the raw amino-acid sequence, 169 residues long: Small ribosomal subunit protein uS13c (169 aa).

The N-terminal 47 residues, 1-47, are a transit peptide targeting the chloroplast; that stretch reads MAQMVAMPVAHSLSLICNWAKSNPLSRNTLALPASNTPNKQSLSIRC.

Belongs to the universal ribosomal protein uS13 family. Part of the 30S ribosomal subunit.

The protein resides in the plastid. It localises to the chloroplast. Its function is as follows. Located at the top of the head of the 30S subunit, it contacts several helices of the 16S rRNA. The chain is Small ribosomal subunit protein uS13c (RPS13) from Arabidopsis thaliana (Mouse-ear cress).